The primary structure comprises 166 residues: Urease accessory protein UreE (166 aa).

The protein belongs to the UreE family.

Its subcellular location is the cytoplasm. In terms of biological role, involved in urease metallocenter assembly. Binds nickel. Probably functions as a nickel donor during metallocenter assembly. This is Urease accessory protein UreE from Azotobacter vinelandii (strain DJ / ATCC BAA-1303).